A 246-amino-acid chain; its full sequence is Protein DEHYDRATION-INDUCED 19 homolog 3 (246 aa).

The segment at 185–230 (ERSKAPVPIPDDTSIHKDTPAQPWESRIDSSLTSEEREQKRKQATD) is disordered. The span at 218-229 (SEEREQKRKQAT) shows a compositional bias: basic and acidic residues.

It belongs to the Di19 family.

The polypeptide is Protein DEHYDRATION-INDUCED 19 homolog 3 (DI19-3) (Oryza sativa subsp. japonica (Rice)).